Consider the following 294-residue polypeptide: ATP synthase gamma chain (294 aa).

The protein belongs to the ATPase gamma chain family. In terms of assembly, F-type ATPases have 2 components, CF(1) - the catalytic core - and CF(0) - the membrane proton channel. CF(1) has five subunits: alpha(3), beta(3), gamma(1), delta(1), epsilon(1). CF(0) has three main subunits: a, b and c.

It localises to the cell inner membrane. In terms of biological role, produces ATP from ADP in the presence of a proton gradient across the membrane. The gamma chain is believed to be important in regulating ATPase activity and the flow of protons through the CF(0) complex. The polypeptide is ATP synthase gamma chain (Campylobacter jejuni subsp. doylei (strain ATCC BAA-1458 / RM4099 / 269.97)).